Reading from the N-terminus, the 425-residue chain is tRNA(Met) cytidine acetate ligase (425 aa).

ATP-binding positions include I7 to H20, G102, N165, and R190 to I191.

This sequence belongs to the TmcAL family.

Its subcellular location is the cytoplasm. It catalyses the reaction cytidine(34) in elongator tRNA(Met) + acetate + ATP = N(4)-acetylcytidine(34) in elongator tRNA(Met) + AMP + diphosphate. Its function is as follows. Catalyzes the formation of N(4)-acetylcytidine (ac(4)C) at the wobble position of elongator tRNA(Met), using acetate and ATP as substrates. First activates an acetate ion to form acetyladenylate (Ac-AMP) and then transfers the acetyl group to tRNA to form ac(4)C34. This Thermosipho melanesiensis (strain DSM 12029 / CIP 104789 / BI429) protein is tRNA(Met) cytidine acetate ligase.